The primary structure comprises 88 residues: uncharacterized protein (88 aa).

The interval 1–31 (MIPRDPRSPAPDLSAINQPAGRAERRSGPAT) is disordered.

This is an uncharacterized protein from Escherichia coli.